A 930-amino-acid chain; its full sequence is Isoleucine--tRNA ligase (930 aa).

The 'HIGH' region motif lies at 57-67 (PYANGNIHVGH). Glu-554 is an L-isoleucyl-5'-AMP binding site. Residues 595-599 (KMSKS) carry the 'KMSKS' region motif. Lys-598 contributes to the ATP binding site.

This sequence belongs to the class-I aminoacyl-tRNA synthetase family. IleS type 1 subfamily. Monomer.

It localises to the cytoplasm. It carries out the reaction tRNA(Ile) + L-isoleucine + ATP = L-isoleucyl-tRNA(Ile) + AMP + diphosphate. In terms of biological role, catalyzes the attachment of isoleucine to tRNA(Ile). As IleRS can inadvertently accommodate and process structurally similar amino acids such as valine, to avoid such errors it has two additional distinct tRNA(Ile)-dependent editing activities. One activity is designated as 'pretransfer' editing and involves the hydrolysis of activated Val-AMP. The other activity is designated 'posttransfer' editing and involves deacylation of mischarged Val-tRNA(Ile). This is Isoleucine--tRNA ligase from Streptococcus agalactiae serotype Ia (strain ATCC 27591 / A909 / CDC SS700).